A 199-amino-acid polypeptide reads, in one-letter code: Pre T-cell antigen receptor alpha (199 aa).

The N-terminal stretch at 1 to 16 is a signal peptide; that stretch reads MARTWLLLFLGLRCQA. Topologically, residues 17–155 are extracellular; the sequence is LPSGIAGTPF…RQVLRLSVLR (139 aa). A disulfide bridge connects residues cysteine 47 and cysteine 107. N-linked (GlcNAc...) asparagine glycosylation is found at asparagine 67 and asparagine 117. Positions 117–139 are disordered; the sequence is NRSTHPLQLSGEEASTDRTCPQE. Residues 156-176 form a helical membrane-spanning segment; that stretch reads LLLFKLLLLDVFLTCSRLCVL. Topologically, residues 177–199 are cytoplasmic; it reads AGQHLLPPPSSKQAPASTHQSWT.

Heterodimer with TCRB; disulfide linked. This heterodimer assembles with CD3 proteins into a signaling-competent pre-T-cell receptor complex. Interacts with RHBDD1. Found in CD45+ but not in the CD45- fetal liver cells.

The protein resides in the membrane. It is found in the cell membrane. Its function is as follows. Component of the pre-T-cell receptor complex (composed of PTCRA, TCRB and the CD3 complex) that has a crucial role in early T-cell development, particularly alpha-beta T cell differentiation. This is Pre T-cell antigen receptor alpha from Rattus norvegicus (Rat).